Here is a 410-residue protein sequence, read N- to C-terminus: MASNIMQRCNVFMSERVKLHAAMLALQFGYAGFHIVSRAALNMGVSKVVFPVYRNILALMLIGPCAYFLEKKERPALTLSFLIQFFLLALCGITGQSRILSLRIVLHIPTFASAIQNSVPAITFIMAAALRLEKVHISRRDGLAKIIGTVACVSGATIITLYKGPPITHIWRPNLEVTASYFKAFQGNDLSAKSENWTLGCIYLLGNCLAWSGWIVLQAPVLKRYPARLSVTSFTCFFGVIQFLIIAAFFETDLEHWKIHSGGELFTILYAGFVASGIAFSVQIWCIDRGGPVFVAVYQPVQTIAVAIMASIILGEQFYLGGIFGAILIIIGLYLVLWGKSEEKRLGLLQAKSSMVPENQPDNMDQSATLIINSSNGIKPNTSSSLTQPLLLDTSYKTVNIPSPSDEPQP.

The Cytoplasmic segment spans residues 1–16; the sequence is MASNIMQRCNVFMSER. A helical membrane pass occupies residues 17–37; that stretch reads VKLHAAMLALQFGYAGFHIVS. Residues 38–47 are Extracellular-facing; it reads RAALNMGVSK. A helical membrane pass occupies residues 48-68; the sequence is VVFPVYRNILALMLIGPCAYF. At 69 to 74 the chain is on the cytoplasmic side; that stretch reads LEKKER. Residues 75 to 95 form a helical membrane-spanning segment; sequence PALTLSFLIQFFLLALCGITG. Topologically, residues 96-109 are extracellular; it reads QSRILSLRIVLHIP. Residues 110–130 traverse the membrane as a helical segment; sequence TFASAIQNSVPAITFIMAAAL. Residues 131 to 141 lie on the Cytoplasmic side of the membrane; the sequence is RLEKVHISRRD. The chain crosses the membrane as a helical span at residues 142 to 162; it reads GLAKIIGTVACVSGATIITLY. The Extracellular segment spans residues 163 to 196; that stretch reads KGPPITHIWRPNLEVTASYFKAFQGNDLSAKSEN. A glycan (N-linked (GlcNAc...) asparagine) is linked at Asn196. Residues 197 to 217 form a helical membrane-spanning segment; it reads WTLGCIYLLGNCLAWSGWIVL. One can recognise an EamA domain in the interval 209 to 338; that stretch reads LAWSGWIVLQ…IIIGLYLVLW (130 aa). Residues 218–229 lie on the Cytoplasmic side of the membrane; the sequence is QAPVLKRYPARL. Residues 230–250 form a helical membrane-spanning segment; it reads SVTSFTCFFGVIQFLIIAAFF. The Extracellular portion of the chain corresponds to 251 to 264; the sequence is ETDLEHWKIHSGGE. A helical transmembrane segment spans residues 265 to 285; sequence LFTILYAGFVASGIAFSVQIW. The Cytoplasmic segment spans residues 286–292; the sequence is CIDRGGP. The chain crosses the membrane as a helical span at residues 293 to 313; it reads VFVAVYQPVQTIAVAIMASII. Residues 314–317 are Extracellular-facing; the sequence is LGEQ. A helical transmembrane segment spans residues 318–338; that stretch reads FYLGGIFGAILIIIGLYLVLW. The Cytoplasmic portion of the chain corresponds to 339 to 410; that stretch reads GKSEEKRLGL…IPSPSDEPQP (72 aa).

It belongs to the drug/metabolite transporter (DMT) superfamily. Plant drug/metabolite exporter (P-DME) (TC 2.A.7.4) family.

Its subcellular location is the membrane. In Pinus taeda (Loblolly pine), this protein is Auxin-induced protein 5NG4.